A 252-amino-acid polypeptide reads, in one-letter code: Ribosomal RNA large subunit methyltransferase E (252 aa).

Residues Gly48, Trp50, Asp68, Asp84, and Asp107 each coordinate S-adenosyl-L-methionine. The Proton acceptor role is filled by Lys147. Positions 194-252 (PVREGDTLEVEIDNLGDEGDGVAKVDGYTLFVSGAEPGDAPEVRVTDVKPRFGFAETLE) constitute a TRAM domain.

It belongs to the class I-like SAM-binding methyltransferase superfamily. RNA methyltransferase RlmE family.

The protein localises to the cytoplasm. It carries out the reaction uridine(2552) in 23S rRNA + S-adenosyl-L-methionine = 2'-O-methyluridine(2552) in 23S rRNA + S-adenosyl-L-homocysteine + H(+). Specifically methylates the uridine in position 2552 of 23S rRNA at the 2'-O position of the ribose in the fully assembled 50S ribosomal subunit. The sequence is that of Ribosomal RNA large subunit methyltransferase E from Natronomonas pharaonis (strain ATCC 35678 / DSM 2160 / CIP 103997 / JCM 8858 / NBRC 14720 / NCIMB 2260 / Gabara) (Halobacterium pharaonis).